The following is a 383-amino-acid chain: Dephospho-CoA kinase (383 aa).

Residues 3 to 201 (RIGLTGGMGA…RRLVPFERNL (199 aa)) form the DPCK domain. Position 11–16 (11–16 (GAGKST)) interacts with ATP. The UPF0157 stretch occupies residues 196-383 (PFERNLRAAT…EVAERLLGTV (188 aa)).

It in the N-terminal section; belongs to the CoaE family. The protein in the C-terminal section; belongs to the UPF0157 (GrpB) family.

The protein localises to the cytoplasm. The catalysed reaction is 3'-dephospho-CoA + ATP = ADP + CoA + H(+). It participates in cofactor biosynthesis; coenzyme A biosynthesis; CoA from (R)-pantothenate: step 5/5. In terms of biological role, catalyzes the phosphorylation of the 3'-hydroxyl group of dephosphocoenzyme A to form coenzyme A. The sequence is that of Dephospho-CoA kinase from Nocardia farcinica (strain IFM 10152).